Reading from the N-terminus, the 201-residue chain is Lipoprotein signal peptidase (201 aa).

A run of 2 helical transmembrane segments spans residues 73–93 (SNAI…YLMI) and 97–117 (TIGS…NLID). Active-site residues include D126 and D144. Residues 135–155 (YSFPVFNLADCFIIIGVIILI) traverse the membrane as a helical segment.

It belongs to the peptidase A8 family.

It localises to the cell inner membrane. It carries out the reaction Release of signal peptides from bacterial membrane prolipoproteins. Hydrolyzes -Xaa-Yaa-Zaa-|-(S,diacylglyceryl)Cys-, in which Xaa is hydrophobic (preferably Leu), and Yaa (Ala or Ser) and Zaa (Gly or Ala) have small, neutral side chains.. Its pathway is protein modification; lipoprotein biosynthesis (signal peptide cleavage). Its function is as follows. This protein specifically catalyzes the removal of signal peptides from prolipoproteins. This is Lipoprotein signal peptidase from Rickettsia conorii (strain ATCC VR-613 / Malish 7).